Reading from the N-terminus, the 306-residue chain is Ribonuclease Z (306 aa).

Positions 63, 65, 67, 68, 141, 211, and 269 each coordinate Zn(2+). The active-site Proton acceptor is the Asp67.

It belongs to the RNase Z family. In terms of assembly, homodimer. Zn(2+) is required as a cofactor.

It catalyses the reaction Endonucleolytic cleavage of RNA, removing extra 3' nucleotides from tRNA precursor, generating 3' termini of tRNAs. A 3'-hydroxy group is left at the tRNA terminus and a 5'-phosphoryl group is left at the trailer molecule.. Zinc phosphodiesterase, which displays some tRNA 3'-processing endonuclease activity. Probably involved in tRNA maturation, by removing a 3'-trailer from precursor tRNA. The chain is Ribonuclease Z from Staphylococcus aureus (strain USA300).